Consider the following 101-residue polypeptide: uncharacterized protein (101 aa).

A helical membrane pass occupies residues 58 to 80 (VFPSLNIIILMSDALMFFLRSSI).

It localises to the membrane. This is an uncharacterized protein from Saccharomyces cerevisiae (strain ATCC 204508 / S288c) (Baker's yeast).